A 283-amino-acid polypeptide reads, in one-letter code: S-methyl-5'-thioadenosine phosphorylase (283 aa).

Thr-18 provides a ligand contact to phosphate. Lys-51 carries the N6-acetyllysine modification. Phosphate contacts are provided by residues 60 to 61 (RH) and 93 to 94 (TA). Met-196 is a binding site for substrate. Thr-197 provides a ligand contact to phosphate. Residue 220-222 (DYD) coordinates substrate.

Belongs to the PNP/MTAP phosphorylase family. MTAP subfamily. In terms of assembly, homotrimer.

The protein localises to the cytoplasm. The protein resides in the nucleus. It catalyses the reaction S-methyl-5'-thioadenosine + phosphate = 5-(methylsulfanyl)-alpha-D-ribose 1-phosphate + adenine. Its pathway is amino-acid biosynthesis; L-methionine biosynthesis via salvage pathway; S-methyl-5-thio-alpha-D-ribose 1-phosphate from S-methyl-5'-thioadenosine (phosphorylase route): step 1/1. Functionally, catalyzes the reversible phosphorylation of S-methyl-5'-thioadenosine (MTA) to adenine and 5-methylthioribose-1-phosphate. Involved in the breakdown of MTA, a major by-product of polyamine biosynthesis. Responsible for the first step in the methionine salvage pathway after MTA has been generated from S-adenosylmethionine. Has broad substrate specificity with 6-aminopurine nucleosides as preferred substrates. The sequence is that of S-methyl-5'-thioadenosine phosphorylase from Bos taurus (Bovine).